A 485-amino-acid chain; its full sequence is MPATETADKNTKSANSDTSGRVVRVTGPVVDVEFPRGSVPDLFNALHAEITFEELAKTLTLEVAQHLGDNLVRTMSLQPTDGLVRGVEVIDTGRSISVPVGQEVKGHVFNALGHCLDKPGYGEDFEHWSIHRKPPPFEELEPRTEMLETGLKVVDLLTPYVRGGKIALFGGAGVGKTVLIQEMINRIARNFGGTSVFAGVGERTREGNDLWVELQEANVLKDTALVFGQMDEPPGTRMRVALSALTMAEWFRDEAGQDVLLFIDNIFRFTQAGSEVSTLLGRMPSAVGYQPTLADEMGELQERITSTRGRSITSMQAVYVPADDYTDPAPATTFAHLDATTELSRSVFSKGIFPAVDPLASSSTILDPGVVGEEHYRVAQEVIRILQRYKDLQDIIAILGIDELSEEDKQLVNRARRIERFLSQNMMAAEQFTGQPGSTVPLKETIEAFDRLTKGEFDHVPEQAFFLIGGLDDLAKKAESLGAKL.

The segment covering 1–11 (MPATETADKNT) has biased composition (basic and acidic residues). The interval 1–20 (MPATETADKNTKSANSDTSG) is disordered. 170–177 (GGAGVGKT) contacts ATP.

The protein belongs to the ATPase alpha/beta chains family. As to quaternary structure, F-type ATPases have 2 components, CF(1) - the catalytic core - and CF(0) - the membrane proton channel. CF(1) has five subunits: alpha(3), beta(3), gamma(1), delta(1), epsilon(1). CF(0) has three main subunits: a(1), b(2) and c(9-12). The alpha and beta chains form an alternating ring which encloses part of the gamma chain. CF(1) is attached to CF(0) by a central stalk formed by the gamma and epsilon chains, while a peripheral stalk is formed by the delta and b chains.

Its subcellular location is the cell membrane. The enzyme catalyses ATP + H2O + 4 H(+)(in) = ADP + phosphate + 5 H(+)(out). Its function is as follows. Produces ATP from ADP in the presence of a proton gradient across the membrane. The catalytic sites are hosted primarily by the beta subunits. This chain is ATP synthase subunit beta, found in Mycolicibacterium paratuberculosis (strain ATCC BAA-968 / K-10) (Mycobacterium paratuberculosis).